Reading from the N-terminus, the 142-residue chain is MKHKIKKRKLSRCTEHRLSMLKNLSISLINHEQIITTLPKAKELRPYVEKFITIAKNKNTLHGRRLLLSRLHNNKLVVDKLLNVLASRYQGCKGGYSRVMKFSTRKGDCASMAVIELVNRDVTAKGKVCDKNKEKNEVATKS.

It belongs to the bacterial ribosomal protein bL17 family. As to quaternary structure, part of the 50S ribosomal subunit. Contacts protein L32.

The sequence is that of Large ribosomal subunit protein bL17 from Wolbachia sp. subsp. Brugia malayi (strain TRS).